A 93-amino-acid polypeptide reads, in one-letter code: Sec-independent protein translocase protein TatA (93 aa).

The helical transmembrane segment at 1–21 (MGNVFSGWHLLVILLVIVLLF) threads the bilayer. Residues 49 to 93 (DITRSQDGHPDSQGNFAESASSVPFVKSEKQSEKRASVTEAKKSK) form a disordered region. Residues 60–70 (SQGNFAESASS) show a composition bias toward polar residues. The span at 75 to 93 (KSEKQSEKRASVTEAKKSK) shows a compositional bias: basic and acidic residues.

This sequence belongs to the TatA/E family. The Tat system comprises two distinct complexes: a TatABC complex, containing multiple copies of TatA, TatB and TatC subunits, and a separate TatA complex, containing only TatA subunits. Substrates initially bind to the TatABC complex, which probably triggers association of the separate TatA complex to form the active translocon.

It is found in the cell membrane. In terms of biological role, part of the twin-arginine translocation (Tat) system that transports large folded proteins containing a characteristic twin-arginine motif in their signal peptide across membranes. TatA could form the protein-conducting channel of the Tat system. This chain is Sec-independent protein translocase protein TatA, found in Tropheryma whipplei (strain TW08/27) (Whipple's bacillus).